The following is a 297-amino-acid chain: Calponin-1 (297 aa).

One can recognise a Calponin-homology (CH) domain in the interval 28–131; that stretch reads HQREQELREW…STLLALASMA (104 aa). At Ser48 the chain carries Phosphoserine. Calponin-like repeat units lie at residues 164–189, 204–229, and 243–268; these read IGLQ…RHLY, ISLQ…RQIF, and VSLQ…RQVY. Thr170 bears the Phosphothreonine; by ROCK2 mark. Ser175 carries the post-translational modification Phosphoserine; by ROCK2. A phosphothreonine; by ROCK2 mark is found at Thr180 and Thr184. Thr259 carries the phosphothreonine; by ROCK2 modification.

It belongs to the calponin family. Part of cGMP kinase signaling complex at least composed of ACTA2/alpha-actin, CNN1/calponin H1, PLN/phospholamban, PRKG1 and ITPR1. In terms of tissue distribution, smooth muscle, and tissues containing significant amounts of smooth muscle.

Its function is as follows. Thin filament-associated protein that is implicated in the regulation and modulation of smooth muscle contraction. It is capable of binding to actin, calmodulin and tropomyosin. The interaction of calponin with actin inhibits the actomyosin Mg-ATPase activity. The polypeptide is Calponin-1 (Cnn1) (Rattus norvegicus (Rat)).